A 264-amino-acid chain; its full sequence is L-aspartate dehydrogenase (264 aa).

The NAD(+) site is built by Ala-120 and Asn-186. Residue His-216 is part of the active site.

The protein belongs to the L-aspartate dehydrogenase family.

It catalyses the reaction L-aspartate + NADP(+) + H2O = oxaloacetate + NH4(+) + NADPH + H(+). The catalysed reaction is L-aspartate + NAD(+) + H2O = oxaloacetate + NH4(+) + NADH + H(+). The protein operates within cofactor biosynthesis; NAD(+) biosynthesis; iminoaspartate from L-aspartate (dehydrogenase route): step 1/1. Its function is as follows. Specifically catalyzes the NAD or NADP-dependent dehydrogenation of L-aspartate to iminoaspartate. The polypeptide is L-aspartate dehydrogenase (Serratia proteamaculans (strain 568)).